Here is a 212-residue protein sequence, read N- to C-terminus: 3-demethoxyubiquinol 3-hydroxylase (212 aa).

Positions methionine 1 to proline 14 are enriched in low complexity. The interval methionine 1–glutamate 22 is disordered. Fe cation is bound by residues glutamate 58, glutamate 89, histidine 92, glutamate 141, glutamate 173, and histidine 176.

Belongs to the COQ7 family. Fe cation is required as a cofactor.

The protein localises to the cell membrane. The enzyme catalyses a 5-methoxy-2-methyl-3-(all-trans-polyprenyl)benzene-1,4-diol + AH2 + O2 = a 3-demethylubiquinol + A + H2O. It functions in the pathway cofactor biosynthesis; ubiquinone biosynthesis. Its function is as follows. Catalyzes the hydroxylation of 2-nonaprenyl-3-methyl-6-methoxy-1,4-benzoquinol during ubiquinone biosynthesis. The chain is 3-demethoxyubiquinol 3-hydroxylase from Rhodospirillum rubrum (strain ATCC 11170 / ATH 1.1.1 / DSM 467 / LMG 4362 / NCIMB 8255 / S1).